Reading from the N-terminus, the 206-residue chain is Orotate phosphoribosyltransferase (206 aa).

5-phospho-alpha-D-ribose 1-diphosphate contacts are provided by residues R114, K115, K118, H120, and 141 to 149 (EDVVTTGQS). Positions 145 and 173 each coordinate orotate.

This sequence belongs to the purine/pyrimidine phosphoribosyltransferase family. PyrE subfamily. Homodimer. Requires Mg(2+) as cofactor.

It catalyses the reaction orotidine 5'-phosphate + diphosphate = orotate + 5-phospho-alpha-D-ribose 1-diphosphate. The protein operates within pyrimidine metabolism; UMP biosynthesis via de novo pathway; UMP from orotate: step 1/2. Its function is as follows. Catalyzes the transfer of a ribosyl phosphate group from 5-phosphoribose 1-diphosphate to orotate, leading to the formation of orotidine monophosphate (OMP). This Nostoc sp. (strain PCC 7120 / SAG 25.82 / UTEX 2576) protein is Orotate phosphoribosyltransferase.